A 177-amino-acid polypeptide reads, in one-letter code: Ribonuclease M5 (177 aa).

The Toprim domain maps to 5–99; that stretch reads KQIIIVEGKT…NKTSKKIGIA (95 aa). E11, D59, and D61 together coordinate Mg(2+).

The protein belongs to the ribonuclease M5 family. Mg(2+) is required as a cofactor.

Its subcellular location is the cytoplasm. It carries out the reaction Endonucleolytic cleavage of RNA, removing 21 and 42 nucleotides, respectively, from the 5'- and 3'-termini of a 5S-rRNA precursor.. Its function is as follows. Required for correct processing of both the 5' and 3' ends of 5S rRNA precursor. Cleaves both sides of a double-stranded region yielding mature 5S rRNA in one step. The polypeptide is Ribonuclease M5 (Mycoplasma mycoides subsp. mycoides SC (strain CCUG 32753 / NCTC 10114 / PG1)).